We begin with the raw amino-acid sequence, 146 residues long: Large ribosomal subunit protein uL22 (146 aa).

Positions 1–39 (MAETQTTTPKKKAERRAPPPARARKNRPAAPAPGPHASL) are disordered.

Belongs to the universal ribosomal protein uL22 family. As to quaternary structure, part of the 50S ribosomal subunit.

This protein binds specifically to 23S rRNA; its binding is stimulated by other ribosomal proteins, e.g. L4, L17, and L20. It is important during the early stages of 50S assembly. It makes multiple contacts with different domains of the 23S rRNA in the assembled 50S subunit and ribosome. Its function is as follows. The globular domain of the protein is located near the polypeptide exit tunnel on the outside of the subunit, while an extended beta-hairpin is found that lines the wall of the exit tunnel in the center of the 70S ribosome. In Anaeromyxobacter dehalogenans (strain 2CP-1 / ATCC BAA-258), this protein is Large ribosomal subunit protein uL22.